The following is a 255-amino-acid chain: 3-dehydroquinate dehydratase (255 aa).

Residues E47 to R49 and R83 each bind 3-dehydroquinate. H145 (proton donor/acceptor) is an active-site residue. The active-site Schiff-base intermediate with substrate is K172. Positions 215, 234, and 238 each coordinate 3-dehydroquinate.

It belongs to the type-I 3-dehydroquinase family. As to quaternary structure, homodimer.

It carries out the reaction 3-dehydroquinate = 3-dehydroshikimate + H2O. It participates in metabolic intermediate biosynthesis; chorismate biosynthesis; chorismate from D-erythrose 4-phosphate and phosphoenolpyruvate: step 3/7. Its function is as follows. Involved in the third step of the chorismate pathway, which leads to the biosynthesis of aromatic amino acids. Catalyzes the cis-dehydration of 3-dehydroquinate (DHQ) and introduces the first double bond of the aromatic ring to yield 3-dehydroshikimate. The chain is 3-dehydroquinate dehydratase from Clostridium kluyveri (strain NBRC 12016).